Consider the following 138-residue polypeptide: Ergosterol biosynthetic protein 28 (138 aa).

A helical membrane pass occupies residues 17–33; that stretch reads LPYWLLFISVVSIFNSV. N-linked (GlcNAc...) asparagine glycosylation occurs at Asn-40. Helical transmembrane passes span 56-75, 87-107, and 114-131; these read LSAR…RFYG, LTQF…LYFG, and GLSG…WMYL.

The protein belongs to the ERG28 family. As to quaternary structure, heterotetramer of ERG25, ERG26, ERG27 and ERG28. ERG28 acts as a scaffold to tether ERG27 and other 4,4-demethylation-related enzymes, forming a demethylation enzyme complex, in the endoplasmic reticulum. Interacts with ERG25, ERG26 and ERG27. Also interacts with ERG1, ERG3, ERG5, ERG6 and ERG11.

The protein localises to the endoplasmic reticulum membrane. Functionally, part of the third module of ergosterol biosynthesis pathway that includes the late steps of the pathway. ERG28 has a role as a scaffold to help anchor the catalytic components of the C-4 demethylation complex ERG25, ERG26 and ERG27 to the endoplasmic reticulum. The third module or late pathway involves the ergosterol synthesis itself through consecutive reactions that mainly occur in the endoplasmic reticulum (ER) membrane. Firstly, the squalene synthase ERG9 catalyzes the condensation of 2 farnesyl pyrophosphate moieties to form squalene, which is the precursor of all steroids. Squalene synthase is crucial for balancing the incorporation of farnesyl diphosphate (FPP) into sterol and nonsterol isoprene synthesis. Secondly, the squalene epoxidase ERG1 catalyzes the stereospecific oxidation of squalene to (S)-2,3-epoxysqualene, which is considered to be a rate-limiting enzyme in steroid biosynthesis. Then, the lanosterol synthase ERG7 catalyzes the cyclization of (S)-2,3 oxidosqualene to lanosterol, a reaction that forms the sterol core. In the next steps, lanosterol is transformed to zymosterol through a complex process involving various demethylation, reduction and desaturation reactions. The lanosterol 14-alpha-demethylase ERG11 (also known as CYP51) catalyzes C14-demethylation of lanosterol to produce 4,4'-dimethyl cholesta-8,14,24-triene-3-beta-ol, which is critical for ergosterol biosynthesis. The C-14 reductase ERG24 reduces the C14=C15 double bond of 4,4-dimethyl-cholesta-8,14,24-trienol to produce 4,4-dimethyl-cholesta-8,24-dienol. 4,4-dimethyl-cholesta-8,24-dienol is substrate of the C-4 demethylation complex ERG25-ERG26-ERG27 in which ERG25 catalyzes the three-step monooxygenation required for the demethylation of 4,4-dimethyl and 4alpha-methylsterols, ERG26 catalyzes the oxidative decarboxylation that results in a reduction of the 3-beta-hydroxy group at the C-3 carbon to an oxo group, and ERG27 is responsible for the reduction of the keto group on the C-3. ERG28 has a role as a scaffold to help anchor ERG25, ERG26 and ERG27 to the endoplasmic reticulum and ERG29 regulates the activity of the iron-containing C4-methylsterol oxidase ERG25. Then, the sterol 24-C-methyltransferase ERG6 catalyzes the methyl transfer from S-adenosyl-methionine to the C-24 of zymosterol to form fecosterol. The C-8 sterol isomerase ERG2 catalyzes the reaction which results in unsaturation at C-7 in the B ring of sterols and thus converts fecosterol to episterol. The sterol-C5-desaturase ERG3 then catalyzes the introduction of a C-5 double bond in the B ring to produce 5-dehydroepisterol. The C-22 sterol desaturase ERG5 further converts 5-dehydroepisterol into ergosta-5,7,22,24(28)-tetraen-3beta-ol by forming the C-22(23) double bond in the sterol side chain. Finally, ergosta-5,7,22,24(28)-tetraen-3beta-ol is substrate of the C-24(28) sterol reductase ERG4 to produce ergosterol. This Candida albicans (strain SC5314 / ATCC MYA-2876) (Yeast) protein is Ergosterol biosynthetic protein 28.